The chain runs to 248 residues: Small ribosomal subunit protein uS3 (248 aa).

One can recognise a KH type-2 domain in the interval 39–113 (IRAYLTKQLS…TIRINVVEVT (75 aa)). Residues 218–248 (ERPEQKVPLQQPKRRQQRRRPTFEDRSAVEA) are disordered. The segment covering 238-248 (PTFEDRSAVEA) has biased composition (basic and acidic residues).

Belongs to the universal ribosomal protein uS3 family. In terms of assembly, part of the 30S ribosomal subunit. Forms a tight complex with proteins S10 and S14.

In terms of biological role, binds the lower part of the 30S subunit head. Binds mRNA in the 70S ribosome, positioning it for translation. The protein is Small ribosomal subunit protein uS3 of Synechococcus sp. (strain JA-3-3Ab) (Cyanobacteria bacterium Yellowstone A-Prime).